The sequence spans 157 residues: Ribosome maturation factor RimP (157 aa).

This sequence belongs to the RimP family.

The protein resides in the cytoplasm. Required for maturation of 30S ribosomal subunits. This Lactococcus lactis subsp. lactis (strain IL1403) (Streptococcus lactis) protein is Ribosome maturation factor RimP.